Reading from the N-terminus, the 172-residue chain is Cytochrome c oxidase subunit 4 isoform 2, mitochondrial (172 aa).

The N-terminal 34 residues, 1–34 (MFSRAARSLVMRTGLRTRGTGTHSPGDAAGSQRR), are a transit peptide targeting the mitochondrion. The segment covering 13–22 (TGLRTRGTGT) has biased composition (low complexity). The interval 13–32 (TGLRTRGTGTHSPGDAAGSQ) is disordered. The Mitochondrial matrix segment spans residues 35–101 (MTPYVDCYAQ…TFAEMNHRSN (67 aa)). A helical membrane pass occupies residues 102–127 (EWKTVMGCVFFFIGFTALVIWWQRVY). Residues 128–172 (VFPKKVVTLTEERKAQQLQRLLDMKSNPIQGLAAHWDYEKKEWKK) are Mitochondrial intermembrane-facing.

Belongs to the cytochrome c oxidase IV family. In terms of assembly, component of the cytochrome c oxidase (complex IV, CIV), a multisubunit enzyme composed of 14 subunits. The complex is composed of a catalytic core of 3 subunits MT-CO1, MT-CO2 and MT-CO3, encoded in the mitochondrial DNA, and 11 supernumerary subunits COX4I, COX5A, COX5B, COX6A, COX6B, COX6C, COX7A, COX7B, COX7C, COX8 and NDUFA4, which are encoded in the nuclear genome. The complex exists as a monomer or a dimer and forms supercomplexes (SCs) in the inner mitochondrial membrane with NADH-ubiquinone oxidoreductase (complex I, CI) and ubiquinol-cytochrome c oxidoreductase (cytochrome b-c1 complex, complex III, CIII), resulting in different assemblies (supercomplex SCI(1)III(2)IV(1) and megacomplex MCI(2)III(2)IV(2)).

It is found in the mitochondrion inner membrane. It participates in energy metabolism; oxidative phosphorylation. In terms of biological role, component of the cytochrome c oxidase, the last enzyme in the mitochondrial electron transport chain which drives oxidative phosphorylation. The respiratory chain contains 3 multisubunit complexes succinate dehydrogenase (complex II, CII), ubiquinol-cytochrome c oxidoreductase (cytochrome b-c1 complex, complex III, CIII) and cytochrome c oxidase (complex IV, CIV), that cooperate to transfer electrons derived from NADH and succinate to molecular oxygen, creating an electrochemical gradient over the inner membrane that drives transmembrane transport and the ATP synthase. Cytochrome c oxidase is the component of the respiratory chain that catalyzes the reduction of oxygen to water. Electrons originating from reduced cytochrome c in the intermembrane space (IMS) are transferred via the dinuclear copper A center (CU(A)) of subunit 2 and heme A of subunit 1 to the active site in subunit 1, a binuclear center (BNC) formed by heme A3 and copper B (CU(B)). The BNC reduces molecular oxygen to 2 water molecules using 4 electrons from cytochrome c in the IMS and 4 protons from the mitochondrial matrix. The chain is Cytochrome c oxidase subunit 4 isoform 2, mitochondrial (Cox4i2) from Mus musculus (Mouse).